The chain runs to 314 residues: Serine/threonine-protein phosphatase PP2A-4 catalytic subunit (314 aa).

Residues D62, H64, D90, and N122 each coordinate Mn(2+). Residue H123 is the Proton donor of the active site. Mn(2+)-binding residues include H172 and H246.

This sequence belongs to the PPP phosphatase family. PP-2A subfamily. Mn(2+) serves as cofactor.

The protein resides in the cytoplasm. The enzyme catalyses O-phospho-L-seryl-[protein] + H2O = L-seryl-[protein] + phosphate. The catalysed reaction is O-phospho-L-threonyl-[protein] + H2O = L-threonyl-[protein] + phosphate. This is Serine/threonine-protein phosphatase PP2A-4 catalytic subunit (PP2A4) from Oryza sativa subsp. japonica (Rice).